The following is a 522-amino-acid chain: Lysophospholipid acyltransferase LPCAT4 (522 aa).

A run of 2 helical transmembrane segments spans residues 43 to 63 (ILGFTLFPLRFLLAAIFLFLM) and 92 to 112 (HLIYLLSRTMFFMCGFHWITI). The HXXXXD motif motif lies at 130–135 (HSTFFD). N-linked (GlcNAc...) asparagine glycosylation is found at Asn-166 and Asn-517. The tract at residues 496-522 (GRRKPPHIQQNGGCSGKNNPRNQSKMD) is disordered. Positions 503–522 (IQQNGGCSGKNNPRNQSKMD) are enriched in polar residues.

The protein belongs to the 1-acyl-sn-glycerol-3-phosphate acyltransferase family.

Its subcellular location is the endoplasmic reticulum membrane. It carries out the reaction a 1-acyl-sn-glycero-3-phosphoethanolamine + an acyl-CoA = a 1,2-diacyl-sn-glycero-3-phosphoethanolamine + CoA. It catalyses the reaction a 1-O-(1Z-alkenyl)-sn-glycero-3-phosphoethanolamine + an acyl-CoA = a 1-O-(1Z-alkenyl)-2-acyl-sn-glycero-3-phosphoethanolamine + CoA. The catalysed reaction is a 1-acyl-sn-glycero-3-phosphocholine + an acyl-CoA = a 1,2-diacyl-sn-glycero-3-phosphocholine + CoA. The enzyme catalyses a 1-O-alkyl-sn-glycero-3-phosphocholine + acetyl-CoA = a 1-O-alkyl-2-acetyl-sn-glycero-3-phosphocholine + CoA. It carries out the reaction a 1-acyl-sn-glycero-3-phospho-L-serine + an acyl-CoA = a 1,2-diacyl-sn-glycero-3-phospho-L-serine + CoA. The protein operates within lipid metabolism; phospholipid metabolism. Functionally, displays acyl-CoA-dependent lysophospholipid acyltransferase activity with a subset of lysophospholipids as substrates. Prefers long chain acyl-CoAs (C16, C18) as acyl donors. This chain is Lysophospholipid acyltransferase LPCAT4 (lpcat4), found in Xenopus tropicalis (Western clawed frog).